We begin with the raw amino-acid sequence, 396 residues long: Cell division protein DivIB (396 aa).

Disordered regions lie at residues Met1 to Gln23 and Glu37 to Glu116. The Cytoplasmic segment spans residues Met1 to Arg130. Basic and acidic residues-rich tracts occupy residues Glu37 to Gln65 and Glu75 to Glu116. A helical transmembrane segment spans residues Ala131–Pro151. Over Tyr152–Arg396 the chain is Extracellular. A POTRA domain is found at Ala153–Tyr223. Positions Lys361–Asn385 are enriched in basic and acidic residues. The segment at Lys361 to Arg396 is disordered. Residues Arg386–Arg396 show a composition bias toward low complexity.

This sequence belongs to the FtsQ/DivIB family. DivIB subfamily.

Its subcellular location is the cell membrane. In terms of biological role, cell division protein that may be involved in stabilizing or promoting the assembly of the division complex. The sequence is that of Cell division protein DivIB from Streptococcus pneumoniae (strain ATCC BAA-255 / R6).